The primary structure comprises 534 residues: uncharacterized protein (534 aa).

Disordered regions lie at residues 1-93 (MSSS…DDTG), 123-260 (SPES…LSSA), 313-349 (AAATGRLPRPSPRRKRVQEKKSLGGVSKPALGRTFPS), and 383-505 (PWGA…QGCP). A compositionally biased stretch (pro residues) spans 35–45 (GPGPDPGPEPG). Residues Ser-87 and Ser-123 each carry the phosphoserine modification. Over residues 145–161 (RGAAAQRCGEAARAEAG) the composition is skewed to low complexity. Positions 230–239 (SPKDPRDTPR) are enriched in basic and acidic residues.

This is an uncharacterized protein from Bos taurus (Bovine).